Here is a 144-residue protein sequence, read N- to C-terminus: MLMPKRVKHRKVQRGRMKGRATRGNFLAYGDFGLQATTCGWITSNQIEAARIAINRYIKRGGKLWIKIFPDKPVTEKPAETRMGSGKGSPEYWVAVVKPDRVVFELSGVTEDVAREAMRLASHKLPVRTKFVTRRDFEEMGGEK.

Belongs to the universal ribosomal protein uL16 family. Part of the 50S ribosomal subunit.

Functionally, binds 23S rRNA and is also seen to make contacts with the A and possibly P site tRNAs. This is Large ribosomal subunit protein uL16 from Clostridium botulinum (strain Alaska E43 / Type E3).